We begin with the raw amino-acid sequence, 184 residues long: LPS-assembly lipoprotein LptE (184 aa).

The N-terminal stretch at 1 to 19 is a signal peptide; that stretch reads MRHRLFTLVLGLAVLITAG. The N-palmitoyl cysteine moiety is linked to residue Cys20. Residue Cys20 is the site of S-diacylglycerol cysteine attachment.

Belongs to the LptE lipoprotein family. Component of the lipopolysaccharide transport and assembly complex. Interacts with LptD.

It localises to the cell outer membrane. Functionally, together with LptD, is involved in the assembly of lipopolysaccharide (LPS) at the surface of the outer membrane. Required for the proper assembly of LptD. Binds LPS and may serve as the LPS recognition site at the outer membrane. This Pectobacterium atrosepticum (strain SCRI 1043 / ATCC BAA-672) (Erwinia carotovora subsp. atroseptica) protein is LPS-assembly lipoprotein LptE.